The sequence spans 390 residues: Phosphopentomutase (390 aa).

The Mn(2+) site is built by aspartate 9, aspartate 283, histidine 288, aspartate 324, histidine 325, and histidine 336.

It belongs to the phosphopentomutase family. The cofactor is Mn(2+).

It is found in the cytoplasm. It catalyses the reaction 2-deoxy-alpha-D-ribose 1-phosphate = 2-deoxy-D-ribose 5-phosphate. The enzyme catalyses alpha-D-ribose 1-phosphate = D-ribose 5-phosphate. It functions in the pathway carbohydrate degradation; 2-deoxy-D-ribose 1-phosphate degradation; D-glyceraldehyde 3-phosphate and acetaldehyde from 2-deoxy-alpha-D-ribose 1-phosphate: step 1/2. Isomerase that catalyzes the conversion of deoxy-ribose 1-phosphate (dRib-1-P) and ribose 1-phosphate (Rib-1-P) to deoxy-ribose 5-phosphate (dRib-5-P) and ribose 5-phosphate (Rib-5-P), respectively. The polypeptide is Phosphopentomutase (Thermotoga maritima (strain ATCC 43589 / DSM 3109 / JCM 10099 / NBRC 100826 / MSB8)).